Reading from the N-terminus, the 444-residue chain is Phosphoglucosamine mutase (444 aa).

The Phosphoserine intermediate role is filled by serine 101. Mg(2+)-binding residues include serine 101, aspartate 240, aspartate 242, and aspartate 244. Serine 101 carries the post-translational modification Phosphoserine.

It belongs to the phosphohexose mutase family. The cofactor is Mg(2+). Post-translationally, activated by phosphorylation.

It carries out the reaction alpha-D-glucosamine 1-phosphate = D-glucosamine 6-phosphate. Its function is as follows. Catalyzes the conversion of glucosamine-6-phosphate to glucosamine-1-phosphate. The sequence is that of Phosphoglucosamine mutase from Sphingopyxis alaskensis (strain DSM 13593 / LMG 18877 / RB2256) (Sphingomonas alaskensis).